The following is a 206-amino-acid chain: LexA repressor (206 aa).

The H-T-H motif DNA-binding region spans 28–48 (RAEIARRLGFKSANAAEEHLK). Active-site for autocatalytic cleavage activity residues include Ser-123 and Lys-160.

Belongs to the peptidase S24 family. As to quaternary structure, homodimer.

It carries out the reaction Hydrolysis of Ala-|-Gly bond in repressor LexA.. Functionally, represses a number of genes involved in the response to DNA damage (SOS response), including recA and lexA. In the presence of single-stranded DNA, RecA interacts with LexA causing an autocatalytic cleavage which disrupts the DNA-binding part of LexA, leading to derepression of the SOS regulon and eventually DNA repair. The chain is LexA repressor from Shewanella pealeana (strain ATCC 700345 / ANG-SQ1).